A 423-amino-acid polypeptide reads, in one-letter code: Limonoid 21-O-acetyltransferse (423 aa).

Catalysis depends on proton acceptor residues histidine 152 and aspartate 362.

Belongs to the plant acyltransferase family. As to quaternary structure, monomer. Mainly expressed in petioles.

The enzyme catalyses isomeliandiol + acetyl-CoA = 21-O-acetyl-isomeliandiol + CoA. The protein operates within secondary metabolite biosynthesis; terpenoid biosynthesis. Its function is as follows. Acetyltransferase involved in the biosynthesis of limonoids triterpene natural products such as azadirachtin, an antifeedant widely used as bioinsecticide, and possessing many medicinal applications including anti-tumoral, anti-malarial, anti-rheumatic, antibacterial, anti-inflammatory, anti-pyretic and diuretic effects. Catalyzes the formation of 21-O-acetyl-isomeliandiol from isomeliandiol. The polypeptide is Limonoid 21-O-acetyltransferse (Melia azedarach (Chinaberry tree)).